We begin with the raw amino-acid sequence, 447 residues long: Asparagine--tRNA ligase (447 aa).

It belongs to the class-II aminoacyl-tRNA synthetase family. In terms of assembly, homodimer.

The protein localises to the cytoplasm. It carries out the reaction tRNA(Asn) + L-asparagine + ATP = L-asparaginyl-tRNA(Asn) + AMP + diphosphate + H(+). The sequence is that of Asparagine--tRNA ligase from Lactococcus lactis subsp. cremoris (strain SK11).